The sequence spans 157 residues: 6,7-dimethyl-8-ribityllumazine synthase (157 aa).

5-amino-6-(D-ribitylamino)uracil is bound by residues Trp-27, 59–61 (AIE), and 81–83 (VVI). 86–87 (ET) serves as a coordination point for (2S)-2-hydroxy-3-oxobutyl phosphate. Catalysis depends on His-89, which acts as the Proton donor. Asn-114 is a binding site for 5-amino-6-(D-ribitylamino)uracil. Residue Arg-128 participates in (2S)-2-hydroxy-3-oxobutyl phosphate binding.

It belongs to the DMRL synthase family. Homopentamer.

The enzyme catalyses (2S)-2-hydroxy-3-oxobutyl phosphate + 5-amino-6-(D-ribitylamino)uracil = 6,7-dimethyl-8-(1-D-ribityl)lumazine + phosphate + 2 H2O + H(+). It participates in cofactor biosynthesis; riboflavin biosynthesis; riboflavin from 2-hydroxy-3-oxobutyl phosphate and 5-amino-6-(D-ribitylamino)uracil: step 1/2. Its function is as follows. Catalyzes the formation of 6,7-dimethyl-8-ribityllumazine by condensation of 5-amino-6-(D-ribitylamino)uracil with 3,4-dihydroxy-2-butanone 4-phosphate. This is the penultimate step in the biosynthesis of riboflavin. This Mycolicibacterium vanbaalenii (strain DSM 7251 / JCM 13017 / BCRC 16820 / KCTC 9966 / NRRL B-24157 / PYR-1) (Mycobacterium vanbaalenii) protein is 6,7-dimethyl-8-ribityllumazine synthase.